The chain runs to 157 residues: Probable calcium-binding protein CML15 (157 aa).

4 EF-hand domains span residues 3-38 (DQIRQLKDIFDRFDMDADGSLTILELAALLRSLGLK), 39-74 (PSGDQIHVLLASMDSNGNGFVEFDELVGTILPDLNE), 78-113 (INSEQLLEIFKSFDRDGNGFISAAELAGAMAKMGQP), and 114-149 (LTYKELTEMIKEADTNGDGVISFGEFASIMAKSAVD). Positions 16, 18, 20, 22, 27, 52, 54, 56, 63, 91, 93, 95, 102, 127, 129, 131, and 138 each coordinate Ca(2+).

In terms of biological role, potential calcium sensor. This Arabidopsis thaliana (Mouse-ear cress) protein is Probable calcium-binding protein CML15 (CML15).